Consider the following 113-residue polypeptide: Large ribosomal subunit protein bL20c (113 aa).

Belongs to the bacterial ribosomal protein bL20 family.

It is found in the plastid. Its subcellular location is the chloroplast. Functionally, binds directly to 23S ribosomal RNA and is necessary for the in vitro assembly process of the 50S ribosomal subunit. It is not involved in the protein synthesizing functions of that subunit. The protein is Large ribosomal subunit protein bL20c of Staurastrum punctulatum (Green alga).